Reading from the N-terminus, the 206-residue chain is Guanylyl cyclase inhibitory protein (206 aa).

Glycine 2 carries the N-myristoyl glycine lipid modification. EF-hand domains are found at residues serine 31–glycine 49, asparagine 51–glycine 86, threonine 87–methionine 122, and threonine 135–valine 170. 8 residues coordinate Ca(2+): aspartate 64, asparagine 66, aspartate 68, glutamate 75, aspartate 100, aspartate 102, aspartate 104, and glutamate 111.

In terms of tissue distribution, retina; inner segments, somata and synaptic terminals of cone receptors.

Its function is as follows. Does not stimulate guanylyl cyclase (GC) when free calcium ion concentration is low, but inhibits GC when free calcium ions concentration is elevated. This is Guanylyl cyclase inhibitory protein (GCIP) from Lithobates pipiens (Northern leopard frog).